Consider the following 429-residue polypeptide: Enolase (429 aa).

Q162 lines the (2R)-2-phosphoglycerate pocket. Residue E204 is the Proton donor of the active site. Residues D241, E286, and D313 each contribute to the Mg(2+) site. (2R)-2-phosphoglycerate is bound by residues K338, R367, S368, and K389. Residue K338 is the Proton acceptor of the active site.

It belongs to the enolase family. Mg(2+) serves as cofactor.

The protein resides in the cytoplasm. The protein localises to the secreted. It is found in the cell surface. The enzyme catalyses (2R)-2-phosphoglycerate = phosphoenolpyruvate + H2O. The protein operates within carbohydrate degradation; glycolysis; pyruvate from D-glyceraldehyde 3-phosphate: step 4/5. In terms of biological role, catalyzes the reversible conversion of 2-phosphoglycerate (2-PG) into phosphoenolpyruvate (PEP). It is essential for the degradation of carbohydrates via glycolysis. This Shouchella clausii (strain KSM-K16) (Alkalihalobacillus clausii) protein is Enolase.